Here is a 199-residue protein sequence, read N- to C-terminus: MEQFYYYWSMWFLWVLTTFIFEKTKRRIAVSVFILTNIILSIHDIALYFSLNAAYLMFFVCGCVYAGYLGMYRFRYIMVYLTLVAAYAFVYLFALYDPVWFIIKPEWAAVILIVLLTASVERNFEKQLVLFVLGMCQGELVYSFVIQKLAGAMAVGGFQWLNACSAGMILLFGISKYEHLASQIGQKSKRSNKGATKMS.

6 helical membrane-spanning segments follow: residues 1–21 (MEQF…TFIF), 28–48 (IAVS…IALY), 51–71 (LNAA…YLGM), 83–103 (LVAA…WFII), 127–147 (QLVL…FVIQ), and 154–174 (AVGG…LFGI).

Its subcellular location is the cell membrane. This is an uncharacterized protein from Bacillus subtilis (strain 168).